A 522-amino-acid chain; its full sequence is Glutamate--cysteine ligase (522 aa).

The protein belongs to the glutamate--cysteine ligase type 1 family. Type 1 subfamily.

The enzyme catalyses L-cysteine + L-glutamate + ATP = gamma-L-glutamyl-L-cysteine + ADP + phosphate + H(+). It participates in sulfur metabolism; glutathione biosynthesis; glutathione from L-cysteine and L-glutamate: step 1/2. The protein is Glutamate--cysteine ligase of Vibrio campbellii (strain ATCC BAA-1116).